A 542-amino-acid polypeptide reads, in one-letter code: DM7 family protein GG17591 (542 aa).

Basic and acidic residues predominate over residues 415 to 430 (GETQEMDEAHPTKEES). Residues 415 to 443 (GETQEMDEAHPTKEESKSEEEGEVQSGSQ) form a disordered region.

It belongs to the DM7 family.

This Drosophila erecta (Fruit fly) protein is DM7 family protein GG17591.